The primary structure comprises 1372 residues: DNA-directed RNA polymerase subunit beta' (1372 aa).

Zn(2+) contacts are provided by cysteine 69, cysteine 71, cysteine 84, and cysteine 87. Residues aspartate 460, aspartate 462, and aspartate 464 each coordinate Mg(2+). Cysteine 808, cysteine 882, cysteine 889, and cysteine 892 together coordinate Zn(2+).

The protein belongs to the RNA polymerase beta' chain family. As to quaternary structure, the RNAP catalytic core consists of 2 alpha, 1 beta, 1 beta' and 1 omega subunit. When a sigma factor is associated with the core the holoenzyme is formed, which can initiate transcription. It depends on Mg(2+) as a cofactor. Zn(2+) serves as cofactor.

The catalysed reaction is RNA(n) + a ribonucleoside 5'-triphosphate = RNA(n+1) + diphosphate. Its function is as follows. DNA-dependent RNA polymerase catalyzes the transcription of DNA into RNA using the four ribonucleoside triphosphates as substrates. The protein is DNA-directed RNA polymerase subunit beta' of Rickettsia akari (strain Hartford).